A 256-amino-acid chain; its full sequence is Imidazole glycerol phosphate synthase subunit HisF (256 aa).

Residues D11 and D130 contribute to the active site.

The protein belongs to the HisA/HisF family. As to quaternary structure, heterodimer of HisH and HisF.

The protein resides in the cytoplasm. It carries out the reaction 5-[(5-phospho-1-deoxy-D-ribulos-1-ylimino)methylamino]-1-(5-phospho-beta-D-ribosyl)imidazole-4-carboxamide + L-glutamine = D-erythro-1-(imidazol-4-yl)glycerol 3-phosphate + 5-amino-1-(5-phospho-beta-D-ribosyl)imidazole-4-carboxamide + L-glutamate + H(+). The protein operates within amino-acid biosynthesis; L-histidine biosynthesis; L-histidine from 5-phospho-alpha-D-ribose 1-diphosphate: step 5/9. In terms of biological role, IGPS catalyzes the conversion of PRFAR and glutamine to IGP, AICAR and glutamate. The HisF subunit catalyzes the cyclization activity that produces IGP and AICAR from PRFAR using the ammonia provided by the HisH subunit. This Methylocella silvestris (strain DSM 15510 / CIP 108128 / LMG 27833 / NCIMB 13906 / BL2) protein is Imidazole glycerol phosphate synthase subunit HisF.